The chain runs to 314 residues: 4-hydroxy-3-methylbut-2-enyl diphosphate reductase (314 aa).

Position 12 (Cys12) interacts with [4Fe-4S] cluster. (2E)-4-hydroxy-3-methylbut-2-enyl diphosphate-binding residues include His41 and His74. His41 and His74 together coordinate dimethylallyl diphosphate. Isopentenyl diphosphate contacts are provided by His41 and His74. [4Fe-4S] cluster is bound at residue Cys96. A (2E)-4-hydroxy-3-methylbut-2-enyl diphosphate-binding site is contributed by His124. Residue His124 participates in dimethylallyl diphosphate binding. His124 is an isopentenyl diphosphate binding site. Glu126 (proton donor) is an active-site residue. Thr168 serves as a coordination point for (2E)-4-hydroxy-3-methylbut-2-enyl diphosphate. Cys198 provides a ligand contact to [4Fe-4S] cluster. (2E)-4-hydroxy-3-methylbut-2-enyl diphosphate is bound by residues Ser226, Ser227, Asn228, and Ser270. Residues Ser226, Ser227, Asn228, and Ser270 each coordinate dimethylallyl diphosphate. Isopentenyl diphosphate contacts are provided by Ser226, Ser227, Asn228, and Ser270.

It belongs to the IspH family. [4Fe-4S] cluster is required as a cofactor.

The enzyme catalyses isopentenyl diphosphate + 2 oxidized [2Fe-2S]-[ferredoxin] + H2O = (2E)-4-hydroxy-3-methylbut-2-enyl diphosphate + 2 reduced [2Fe-2S]-[ferredoxin] + 2 H(+). It catalyses the reaction dimethylallyl diphosphate + 2 oxidized [2Fe-2S]-[ferredoxin] + H2O = (2E)-4-hydroxy-3-methylbut-2-enyl diphosphate + 2 reduced [2Fe-2S]-[ferredoxin] + 2 H(+). Its pathway is isoprenoid biosynthesis; dimethylallyl diphosphate biosynthesis; dimethylallyl diphosphate from (2E)-4-hydroxy-3-methylbutenyl diphosphate: step 1/1. It participates in isoprenoid biosynthesis; isopentenyl diphosphate biosynthesis via DXP pathway; isopentenyl diphosphate from 1-deoxy-D-xylulose 5-phosphate: step 6/6. Functionally, catalyzes the conversion of 1-hydroxy-2-methyl-2-(E)-butenyl 4-diphosphate (HMBPP) into a mixture of isopentenyl diphosphate (IPP) and dimethylallyl diphosphate (DMAPP). Acts in the terminal step of the DOXP/MEP pathway for isoprenoid precursor biosynthesis. The polypeptide is 4-hydroxy-3-methylbut-2-enyl diphosphate reductase (Pseudomonas aeruginosa (strain LESB58)).